Consider the following 158-residue polypeptide: Endoribonuclease YbeY (158 aa).

Positions 121, 125, and 131 each coordinate Zn(2+).

The protein belongs to the endoribonuclease YbeY family. Zn(2+) is required as a cofactor.

It is found in the cytoplasm. In terms of biological role, single strand-specific metallo-endoribonuclease involved in late-stage 70S ribosome quality control and in maturation of the 3' terminus of the 16S rRNA. This chain is Endoribonuclease YbeY, found in Exiguobacterium sp. (strain ATCC BAA-1283 / AT1b).